The chain runs to 365 residues: Alanine racemase (365 aa).

Lysine 32 serves as the catalytic Proton acceptor; specific for D-alanine. N6-(pyridoxal phosphate)lysine is present on lysine 32. Arginine 128 provides a ligand contact to substrate. The active-site Proton acceptor; specific for L-alanine is tyrosine 257. Substrate is bound at residue methionine 305.

Belongs to the alanine racemase family. It depends on pyridoxal 5'-phosphate as a cofactor.

The enzyme catalyses L-alanine = D-alanine. It functions in the pathway amino-acid biosynthesis; D-alanine biosynthesis; D-alanine from L-alanine: step 1/1. In terms of biological role, catalyzes the interconversion of L-alanine and D-alanine. May also act on other amino acids. This Francisella tularensis subsp. holarctica (strain OSU18) protein is Alanine racemase (alr).